The chain runs to 370 residues: 3-dehydroquinate synthase (370 aa).

NAD(+) contacts are provided by residues 112-116 (GVIGD), 136-137 (TT), Lys-149, Lys-158, and 176-179 (TLKT). Residues Glu-191, His-256, and His-273 each coordinate Zn(2+).

The protein belongs to the sugar phosphate cyclases superfamily. Dehydroquinate synthase family. Co(2+) is required as a cofactor. Zn(2+) serves as cofactor. The cofactor is NAD(+).

It is found in the cytoplasm. It carries out the reaction 7-phospho-2-dehydro-3-deoxy-D-arabino-heptonate = 3-dehydroquinate + phosphate. Its pathway is metabolic intermediate biosynthesis; chorismate biosynthesis; chorismate from D-erythrose 4-phosphate and phosphoenolpyruvate: step 2/7. Functionally, catalyzes the conversion of 3-deoxy-D-arabino-heptulosonate 7-phosphate (DAHP) to dehydroquinate (DHQ). This chain is 3-dehydroquinate synthase, found in Prochlorococcus marinus (strain MIT 9211).